The following is a 151-amino-acid chain: Troponin C, isoallergen Bla g 6.0101 (151 aa).

EF-hand domains are found at residues 7 to 42 (EQIQ…LGHR), 43 to 78 (LDDD…FLVE), 83 to 118 (AMQQ…LDDK), and 119 to 151 (ITAE…MTGE). Ca(2+) is bound by residues D56, D58, S60, E62, and E67. The Ca(2+) site is built by D132, D134, S136, T138, and E143.

Belongs to the troponin C family.

Functionally, troponin is the central regulatory protein of striated muscle contraction. It consists of three components: Troponin-I (Tn-I) which is the inhibitor of actomyosin ATPase, Troponin-T (Tn-T) which contains the binding site for tropomyosin and Troponin-C (Tn-C). The binding of calcium to Tn-C abolishes the inhibitory action of Tn on actin filaments. This is Troponin C, isoallergen Bla g 6.0101 from Blattella germanica (German cockroach).